The sequence spans 563 residues: GTPase Obg (563 aa).

Residues 2–168 (SDFVDRVTVH…RDVILELKSI (167 aa)) enclose the Obg domain. The 181-residue stretch at 169 to 349 (ADVALVGFPS…LNFALSALVH (181 aa)) folds into the OBG-type G domain. GTP is bound by residues 175-182 (GFPSAGKS), 200-204 (FTTLV), 221-224 (DVPG), 301-304 (NKID), and 330-332 (STA). The Mg(2+) site is built by Ser-182 and Thr-202. One can recognise an OCT domain in the interval 383-469 (DEGGSALEFT…ARMVEFDWDP (87 aa)). Positions 529–563 (RKAGHWADPTVDDDRHDETSLFGHGESSEDGETEE) are disordered.

The protein belongs to the TRAFAC class OBG-HflX-like GTPase superfamily. OBG GTPase family. In terms of assembly, monomer. Mg(2+) serves as cofactor.

It localises to the cytoplasm. Functionally, an essential GTPase which binds GTP, GDP and possibly (p)ppGpp with moderate affinity, with high nucleotide exchange rates and a fairly low GTP hydrolysis rate. Plays a role in control of the cell cycle, stress response, ribosome biogenesis and in those bacteria that undergo differentiation, in morphogenesis control. The polypeptide is GTPase Obg (Bifidobacterium longum (strain NCC 2705)).